The primary structure comprises 509 residues: Maturase K (509 aa).

The protein belongs to the intron maturase 2 family. MatK subfamily.

It localises to the plastid. Its subcellular location is the chloroplast. Its function is as follows. Usually encoded in the trnK tRNA gene intron. Probably assists in splicing its own and other chloroplast group II introns. This is Maturase K from Nicotiana alata (Winged tobacco).